A 229-amino-acid chain; its full sequence is 2,3-bisphosphoglycerate-dependent phosphoglycerate mutase (229 aa).

Residues 7–14 (RHGQSEWN), 20–21 (TG), R59, 86–89 (ERHY), K97, 113–114 (RR), and 182–183 (GN) each bind substrate. Residue H8 is the Tele-phosphohistidine intermediate of the active site. Catalysis depends on E86, which acts as the Proton donor/acceptor.

It belongs to the phosphoglycerate mutase family. BPG-dependent PGAM subfamily.

It catalyses the reaction (2R)-2-phosphoglycerate = (2R)-3-phosphoglycerate. It functions in the pathway carbohydrate degradation; glycolysis; pyruvate from D-glyceraldehyde 3-phosphate: step 3/5. Catalyzes the interconversion of 2-phosphoglycerate and 3-phosphoglycerate. In Listeria innocua serovar 6a (strain ATCC BAA-680 / CLIP 11262), this protein is 2,3-bisphosphoglycerate-dependent phosphoglycerate mutase.